We begin with the raw amino-acid sequence, 82 residues long: Sec-independent protein translocase protein TatA (82 aa).

A helical transmembrane segment spans residues 1-21 (MGIFDWKHWIVILIVVVLVFG). A disordered region spans residues 43–82 (VNTEEDDKKEQPAAQPAQPLNQPHTIDAQAQKVEEPARKD).

It belongs to the TatA/E family. The Tat system comprises two distinct complexes: a TatABC complex, containing multiple copies of TatA, TatB and TatC subunits, and a separate TatA complex, containing only TatA subunits. Substrates initially bind to the TatABC complex, which probably triggers association of the separate TatA complex to form the active translocon.

It is found in the cell inner membrane. Its function is as follows. Part of the twin-arginine translocation (Tat) system that transports large folded proteins containing a characteristic twin-arginine motif in their signal peptide across membranes. TatA could form the protein-conducting channel of the Tat system. This is Sec-independent protein translocase protein TatA from Pseudomonas paraeruginosa (strain DSM 24068 / PA7) (Pseudomonas aeruginosa (strain PA7)).